The following is a 121-amino-acid chain: Large ribosomal subunit protein bL19 (121 aa).

Belongs to the bacterial ribosomal protein bL19 family.

Its function is as follows. This protein is located at the 30S-50S ribosomal subunit interface and may play a role in the structure and function of the aminoacyl-tRNA binding site. This is Large ribosomal subunit protein bL19 from Borreliella burgdorferi (strain ZS7) (Borrelia burgdorferi).